A 300-amino-acid chain; its full sequence is Protoheme IX farnesyltransferase (300 aa).

9 helical membrane passes run 24-44 (VTQL…PGMV), 48-68 (VLLG…AINC), 94-114 (LQIL…LYTF), 118-138 (LTIW…TLLL), 146-166 (IVIG…AVTG), 172-192 (AWIL…VLAL), 217-237 (LHIL…FISG), 239-259 (SGAV…AYAW), and 278-298 (IVYL…RPVI).

The protein belongs to the UbiA prenyltransferase family. Protoheme IX farnesyltransferase subfamily.

The protein resides in the cell inner membrane. The enzyme catalyses heme b + (2E,6E)-farnesyl diphosphate + H2O = Fe(II)-heme o + diphosphate. Its pathway is porphyrin-containing compound metabolism; heme O biosynthesis; heme O from protoheme: step 1/1. Converts heme B (protoheme IX) to heme O by substitution of the vinyl group on carbon 2 of heme B porphyrin ring with a hydroxyethyl farnesyl side group. The chain is Protoheme IX farnesyltransferase from Burkholderia mallei (strain NCTC 10247).